A 135-amino-acid polypeptide reads, in one-letter code: P2Y purinoceptor 4 (135 aa).

A helical transmembrane segment spans residues 1 to 25 (VHFSSSVMVLLFGLPFLVTLVCYGL). Over 26–49 (MALRLCRPLPGAGQSSSRLRSLRT) the chain is Cytoplasmic. A helical membrane pass occupies residues 50–72 (IAVVMTVFAVCLVPFHITRTIYY). Residues 73–90 (LARLLKADCQILNIVNVV) lie on the Extracellular side of the membrane. Residues 91-112 (YKVTRPLASANSCLDPLLYLFT) traverse the membrane as a helical segment. The Cytoplasmic portion of the chain corresponds to 113–135 (GDKYRHQLQRLCRVSAPQRRITA).

The protein belongs to the G-protein coupled receptor 1 family. As to expression, expressed in brain, heart, stria vascularis and vestibular labyrinth.

It is found in the cell membrane. Functionally, receptor for ATP and UTP coupled to G-proteins that activate a phosphatidylinositol-calcium second messenger system. Not activated by UDP. This is P2Y purinoceptor 4 (P2RY4) from Meriones unguiculatus (Mongolian jird).